Consider the following 230-residue polypeptide: Response regulator MprA (230 aa).

The region spanning 4 to 118 (RILVVDDDRA…ELLARMRALL (115 aa)) is the Response regulatory domain. Residue Asp48 is modified to 4-aspartylphosphate. Residues 129–227 (SPALTFLDLT…VRGVGYVLRE (99 aa)) constitute a DNA-binding region (ompR/PhoB-type).

Post-translationally, phosphorylated and dephosphorylated by MprB.

It is found in the cytoplasm. Its function is as follows. Member of the two-component regulatory system MprB/MprA which contributes to maintaining a balance among several systems involved in stress resistance and is required for establishment and maintenance of persistent infection in the host. Functions as a transcriptional regulator that recognizes a 19-bp nucleotide motif comprizing two loosely conserved 8-bp direct DNA-binding motif repeats separated by a 3-bp spacer region. The protein is Response regulator MprA (mprA) of Mycobacterium sp. (strain JLS).